Reading from the N-terminus, the 36-residue chain is TPLQPKYPGDGAPVEDLIQFYDDLQQYLNVVTRPRF.

F36 carries the phenylalanine amide modification.

This sequence belongs to the NPY family.

The protein resides in the secreted. Functionally, hormone secreted by pancreatic cells that acts as a regulator of pancreatic and gastrointestinal functions. This is Pancreatic polypeptide (ppy) from Alligator mississippiensis (American alligator).